The sequence spans 131 residues: QRFP-like peptide (131 aa).

The first 25 residues, 1–25 (MGVRVMRSRICVIGLLVLMLTQSEA), serve as a signal peptide directing secretion. Residues 26-94 (YSFREKSWRT…DDGISPADKR (69 aa)) constitute a propeptide that is removed on maturation. The segment at 48–131 (RRDGGDQAPS…RESRRSFGSD (84 aa)) is disordered. Residues 97–106 (MLQQLAQQLK) are compositionally biased toward polar residues. F119 bears the Phenylalanine amide mark. The segment covering 120 to 131 (GKRESRRSFGSD) has biased composition (basic and acidic residues). Residues 123-131 (ESRRSFGSD) constitute a propeptide that is removed on maturation.

The protein belongs to the RFamide neuropeptide family.

The protein resides in the secreted. Its function is as follows. Ligand for the G-protein coupled receptor QRFPR. The polypeptide is QRFP-like peptide (Branchiostoma floridae (Florida lancelet)).